The sequence spans 457 residues: Adenylosuccinate synthetase isozyme 2 (457 aa).

GTP is bound by residues 40–46 (GDEGKGK) and 68–70 (GHT). Aspartate 41 serves as the catalytic Proton acceptor. Mg(2+) contacts are provided by aspartate 41 and glycine 68. Position 41 (aspartate 41) interacts with substrate. IMP is bound by residues 41 to 44 (DEGK), 66 to 69 (NAGH), threonine 163, arginine 177, asparagine 256, threonine 271, and arginine 335. Histidine 69 acts as the Proton donor in catalysis. 331–337 (VTTGRKR) lines the substrate pocket. Residues arginine 337, 363 to 365 (KLD), and 445 to 448 (GVGK) each bind GTP.

This sequence belongs to the adenylosuccinate synthetase family. Homodimer. It depends on Mg(2+) as a cofactor.

Its subcellular location is the cytoplasm. It localises to the mitochondrion. The enzyme catalyses IMP + L-aspartate + GTP = N(6)-(1,2-dicarboxyethyl)-AMP + GDP + phosphate + 2 H(+). It participates in purine metabolism; AMP biosynthesis via de novo pathway; AMP from IMP: step 1/2. Its activity is regulated as follows. Inhibited competitively by AMP and IMP and non-competitively by fructose 1,6-bisphosphate. Its function is as follows. Plays an important role in the de novo pathway and in the salvage pathway of purine nucleotide biosynthesis. Catalyzes the first committed step in the biosynthesis of AMP from IMP. This Xenopus laevis (African clawed frog) protein is Adenylosuccinate synthetase isozyme 2 (adss2).